We begin with the raw amino-acid sequence, 77 residues long: Protein NS4 (77 aa).

The protein localises to the host cytoplasm. Its subcellular location is the host nucleus. It localises to the host nucleolus. Functionally, may function as a nucleic acid binding protein that modulates transcription of genes participating in the IFN response. The chain is Protein NS4 (Segment-9) from Antilocapra americana (Pronghorn).